The following is a 356-amino-acid chain: Carminomycin 4-O-methyltransferase DauK (356 aa).

Arg153 is a binding site for S-adenosyl-L-methionine. Asp163 contacts substrate. Residues Gly187, Glu210, 237-238 (DF), and Ser252 contribute to the S-adenosyl-L-methionine site. 2 residues coordinate substrate: Asn257 and Arg303.

This sequence belongs to the class I-like SAM-binding methyltransferase superfamily. Cation-independent O-methyltransferase family. In terms of assembly, homodimer and homotetramer in equilibrium.

It catalyses the reaction carminomycin + S-adenosyl-L-methionine = daunorubicin + S-adenosyl-L-homocysteine + H(+). It participates in antibiotic biosynthesis; daunorubicin biosynthesis. The protein operates within antibiotic biosynthesis; carminomycin biosynthesis. Its activity is regulated as follows. Strongly inhibited by S-adenosyl-L-homocysteine and weakly by adenine and methionine. In terms of biological role, involved in the biosynthesis of the anthracyclines carminomycin and daunorubicin (daunomycin) which are aromatic polyketide antibiotics that exhibit high cytotoxicity and are widely applied in the chemotherapy of a variety of cancers. In vivo, catalyzes the transfer of a methyl group from S-adenosyl-L-methionine to the 4-O-position of carminomycin to form daunorubicin. In vitro, it also methylates the anthracyclines rhodomycin D (10-carbomethoxy-13-deoxycarminomycin), 10-carboxy-13-deoxycarminomycin, 13-deoxy-carminomycin and 13-dihydrocarminomycin at the 4-hydroxyl position. This Streptomyces sp. (strain C5) protein is Carminomycin 4-O-methyltransferase DauK (dauK).